Consider the following 311-residue polypeptide: Probable deoxyhypusine synthase (311 aa).

Lys284 serves as the catalytic Nucleophile.

The protein belongs to the deoxyhypusine synthase family. NAD(+) serves as cofactor.

It catalyses the reaction [eIF5A protein]-L-lysine + spermidine = [eIF5A protein]-deoxyhypusine + propane-1,3-diamine. Its pathway is protein modification; eIF5A hypusination. In terms of biological role, catalyzes the NAD-dependent oxidative cleavage of spermidine and the subsequent transfer of the butylamine moiety of spermidine to the epsilon-amino group of a specific lysine residue of the eIF-5A precursor protein to form the intermediate deoxyhypusine residue. This is Probable deoxyhypusine synthase from Picrophilus torridus (strain ATCC 700027 / DSM 9790 / JCM 10055 / NBRC 100828 / KAW 2/3).